The following is a 220-amino-acid chain: MVYKLVLLFCIASLGYSVEYKNTICPPRQDYRYWYFAAELTIGVNYDINSTIIGECHMSESYIDRNANIVLTGYGLEINMTIMDTDQRFVAAAEGVGKDNKLSVLLFTTQRLDKVHHNISVTITCMEMNCGTTKYDSDLPESIHKSSSCDITINGSCVTCVNLETDPTKINPHYLHPKDKYLYHNSEYSMRGSYGVTFIDELNQCLLDIKELSYDICYRE.

The first 17 residues, 1–17 (MVYKLVLLFCIASLGYS), serve as a signal peptide directing secretion. Residues Asn49, Asn79, Asn118, and Asn154 are each glycosylated (N-linked (GlcNAc...) asparagine; by host).

Belongs to the orthopoxvirus OPG038 family. As to quaternary structure, homooligomer. Interacts with host CD80 and CD86 when secreted. Glycosylated by host.

The protein localises to the host endoplasmic reticulum. It is found in the secreted. Plays a role in immune evasion. When secreted, inhibits T-cell activation by preventing the binding of host CD80 and CD86 to soluble CTLA4 and CD28. In the infected cell, may inhibits host NF kappa B activation. This Bos taurus (Bovine) protein is Early protein OPG038 (OPG038).